A 218-amino-acid chain; its full sequence is MTEWITAPGLTDYQEALAFMEARAAAIAAGEAGELVWLVEHPPLYTAGTSAKAADLLEARFPVHAVGRGGQYTYHGPGQRVVYVMLDLNRRGRDVRAFVKALENWVIDALAEFNLRGEIRDGRVGVWIARPDKAPLPDGSMREDKIAAIGVKLRRWVSFHGIAINVEPDLNHYAGIVPCGISGHGVTSLVDMGLPVGMDDLDLALRRSFARNFPPLAG.

The 188-residue stretch at 30 to 217 (GEAGELVWLV…SFARNFPPLA (188 aa)) folds into the BPL/LPL catalytic domain. Residues 68–75 (RGGQYTYH), 148–150 (AIG), and 161–163 (GIA) each bind substrate. Residue Cys-179 is the Acyl-thioester intermediate of the active site.

The protein belongs to the LipB family.

Its subcellular location is the cytoplasm. It carries out the reaction octanoyl-[ACP] + L-lysyl-[protein] = N(6)-octanoyl-L-lysyl-[protein] + holo-[ACP] + H(+). It participates in protein modification; protein lipoylation via endogenous pathway; protein N(6)-(lipoyl)lysine from octanoyl-[acyl-carrier-protein]: step 1/2. Functionally, catalyzes the transfer of endogenously produced octanoic acid from octanoyl-acyl-carrier-protein onto the lipoyl domains of lipoate-dependent enzymes. Lipoyl-ACP can also act as a substrate although octanoyl-ACP is likely to be the physiological substrate. The chain is Octanoyltransferase from Paracoccus denitrificans (strain Pd 1222).